Reading from the N-terminus, the 314-residue chain is Ribosomal RNA small subunit methyltransferase H (314 aa).

S-adenosyl-L-methionine-binding positions include 34–36 (GGH), aspartate 53, phenylalanine 82, aspartate 103, and glutamine 110.

It belongs to the methyltransferase superfamily. RsmH family.

It is found in the cytoplasm. It catalyses the reaction cytidine(1402) in 16S rRNA + S-adenosyl-L-methionine = N(4)-methylcytidine(1402) in 16S rRNA + S-adenosyl-L-homocysteine + H(+). In terms of biological role, specifically methylates the N4 position of cytidine in position 1402 (C1402) of 16S rRNA. This chain is Ribosomal RNA small subunit methyltransferase H, found in Levilactobacillus brevis (strain ATCC 367 / BCRC 12310 / CIP 105137 / JCM 1170 / LMG 11437 / NCIMB 947 / NCTC 947) (Lactobacillus brevis).